The chain runs to 2971 residues: Reticulocyte-binding protein homolog 1 (2971 aa).

The N-terminal stretch at 1–20 (MQRWIFCNIVLHILIYLAEF) is a signal peptide. At 21-2897 (SHEQESYSSN…KKQKNGNHER (2877 aa)) the chain is on the extracellular side. Residues 30–50 (NEKIRKDYSDDNNYEPTPSYE) are disordered. 7 N-linked (GlcNAc...) asparagine glycosylation sites follow: asparagine 70, asparagine 78, asparagine 87, asparagine 135, asparagine 286, asparagine 384, and asparagine 417. Residues 500-833 (LQIVQQKLLE…MQQGYNNLTN (334 aa)) form an erythrocyte binding domain (EBD) region. LRR repeat units lie at residues 528 to 553 (YKNIHDEILNKKNNEITKIIINNIKD) and 607 to 633 (LNNLHTLKQVQNNKIKYEEHIKQILQK). Residue asparagine 685 is glycosylated (N-linked (GlcNAc...) asparagine). LRR repeat units follow at residues 736–758 (IDTISKYILKQKDIELTQHVYTD) and 785–808 (QETLKQITHIVNNIKTIKKDLLKE). Asparagine 830, asparagine 892, asparagine 1000, and asparagine 1010 each carry an N-linked (GlcNAc...) asparagine glycan. LRR repeat units lie at residues 993 to 1018 (LKILKILNISLKACEKNNKSINTLND) and 1356 to 1381 (LRNINLQEIKNNIIKIFKEFKSAHKE). Residue asparagine 1425 is glycosylated (N-linked (GlcNAc...) asparagine). The LRR 7 repeat unit spans residues 1466–1489 (AKYMENIDTYKNNIEIISKQINPE). An N-linked (GlcNAc...) asparagine glycan is attached at asparagine 1496. LRR repeat units follow at residues 1512 to 1537 (YKQINNIIINSNQLKNEAFTIDELQN), 1586 to 1609 (SQNINHVSIYTEQLHNLYIKLEEE), and 1611 to 1636 (EQMKTLYHKSNVLHNQINFNEDAFIN). Asparagine 1664, asparagine 1692, asparagine 1718, asparagine 1816, and asparagine 1844 each carry an N-linked (GlcNAc...) asparagine glycan. 2 LRR repeats span residues 1700 to 1723 (LQELKQVQENVEKVKDIYNQTIKY) and 1809 to 1834 (LKLFVDINSTNNNLDNMLSEINSIQN). Residues 1880-1903 (QNEIRNMNLEKNFMLDKSKKIDEE) form an LRR 13 repeat. N-linked (GlcNAc...) asparagine glycans are attached at residues asparagine 1913 and asparagine 1918. The LRR 14 repeat unit spans residues 1944-1967 (KENIEKIKQEINTLSDVFKKPFFF). N-linked (GlcNAc...) asparagine glycosylation is found at asparagine 2054, asparagine 2207, asparagine 2289, asparagine 2300, asparagine 2338, and asparagine 2405. The LRR 15 repeat unit spans residues 2523 to 2548 (IKDIDNVFIKIQNNKFEQIQKYIEII). Residues asparagine 2598 and asparagine 2752 are each glycosylated (N-linked (GlcNAc...) asparagine). The LRR 16 repeat unit spans residues 2731–2754 (ENIFDNIQLKKKDIDDIIININNT). Basic and acidic residues-rich tracts occupy residues 2773–2782 (KVDEKSEINN) and 2795–2804 (QKNKIKDHNL). Disordered stretches follow at residues 2773–2825 (KVDE…MKEQ) and 2840–2862 (HHVHNHNHNHNQNQKDSTKLQEQ). Asparagine 2811 carries N-linked (GlcNAc...) asparagine glycosylation. The span at 2814–2825 (EESHQNEQMKEQ) shows a compositional bias: basic and acidic residues. A helical membrane pass occupies residues 2898-2918 (MYFASGIVVSILFLSSLGFVI). Residues 2919 to 2971 (NSKNNKQEYDKEQEKQQQNDFVCDNNKMDDKSTQKYGRNQEEVMEISFDNDYI) are Cytoplasmic-facing.

As to quaternary structure, may in part interact with AMA1 in the moving tight junction between the parasite and the erythrocyte membranes; the interaction may facilitate junction formation and active invasion. In terms of processing, proteolytically processed into multiple fragments following schizont rupture. In the mature schizont stage prior to merozoite release, full length RH1 is processed post-Golgi into a 240 kDa N-terminal form and a 120 kDa C-terminal form containing the transmembrane region. Both forms appear not to form a complex. However, they appear to remain in close proximity in late schizonts. Following merozoite invasion of host erythrocytes, the 240 kDa form is further processed into a 140 kDa form which may be involved in the disengagement of the ligand-receptor complex required during the invasion process. Also, the 120 kDa is further cleaved into a 110 kDa form and a transmembrane 9 kDa form probably by ROM4.

The protein localises to the cell membrane. The protein resides in the secreted. It localises to the cell junction. Its subcellular location is the tight junction. It is found in the cytoplasmic vesicle. The protein localises to the secretory vesicle. The protein resides in the rhoptry. Its function is as follows. During the asexual blood stage, binds to a sialic acid containing receptor on the surface of the host erythrocyte and thus is involved in merozoite invasion. Binds erythrocytes via a neuraminidase sensitive and trypsin-, chymotrypsin-resistant receptor. After merozoite attachment and reorientation, RH1 binding to its erythrocyte receptor triggers an increase in intracellular Ca(2+) within the parasite resulting in the release of microneme proteins such as EBA175 which in turn leads to the formation of the tight junction between parasite and host cell. In Plasmodium falciparum (isolate 3D7), this protein is Reticulocyte-binding protein homolog 1.